Reading from the N-terminus, the 79-residue chain is MSFEVFEKLEAKVQQAVDTITLLQMEIEELKDKNNQLAQEVQNAQGSREALEHENHQLREQQHVWQERLQALLGKMEEV.

The stretch at 4 to 78 (EVFEKLEAKV…LQALLGKMEE (75 aa)) forms a coiled coil.

It belongs to the ZapB family. In terms of assembly, homodimer. The ends of the coiled-coil dimer bind to each other, forming polymers. Interacts with FtsZ.

Its subcellular location is the cytoplasm. In terms of biological role, non-essential, abundant cell division factor that is required for proper Z-ring formation. It is recruited early to the divisome by direct interaction with FtsZ, stimulating Z-ring assembly and thereby promoting cell division earlier in the cell cycle. Its recruitment to the Z-ring requires functional FtsA or ZipA. In Cronobacter sakazakii (strain ATCC BAA-894) (Enterobacter sakazakii), this protein is Cell division protein ZapB.